A 457-amino-acid polypeptide reads, in one-letter code: Bifunctional protein GlmU (457 aa).

Positions 1-230 (MSKRYAVVLA…FEESLGVNDR (230 aa)) are pyrophosphorylase. Residues 9–12 (LAAG), K23, Q73, and 78–79 (GT) contribute to the UDP-N-acetyl-alpha-D-glucosamine site. Position 103 (D103) interacts with Mg(2+). UDP-N-acetyl-alpha-D-glucosamine-binding residues include G140, E155, N170, and N228. N228 lines the Mg(2+) pocket. Residues 231–251 (IALAEASRLMQRRINENHMRN) form a linker region. The tract at residues 252 to 457 (GVTLVNPENT…GYAKHLNHGK (206 aa)) is N-acetyltransferase. Residues R333 and K351 each coordinate UDP-N-acetyl-alpha-D-glucosamine. The active-site Proton acceptor is H363. UDP-N-acetyl-alpha-D-glucosamine is bound by residues Y366 and N377. Acetyl-CoA is bound by residues 386 to 387 (NY), A423, and R440.

The protein in the N-terminal section; belongs to the N-acetylglucosamine-1-phosphate uridyltransferase family. In the C-terminal section; belongs to the transferase hexapeptide repeat family. As to quaternary structure, homotrimer. Mg(2+) serves as cofactor.

It localises to the cytoplasm. The enzyme catalyses alpha-D-glucosamine 1-phosphate + acetyl-CoA = N-acetyl-alpha-D-glucosamine 1-phosphate + CoA + H(+). It catalyses the reaction N-acetyl-alpha-D-glucosamine 1-phosphate + UTP + H(+) = UDP-N-acetyl-alpha-D-glucosamine + diphosphate. It participates in nucleotide-sugar biosynthesis; UDP-N-acetyl-alpha-D-glucosamine biosynthesis; N-acetyl-alpha-D-glucosamine 1-phosphate from alpha-D-glucosamine 6-phosphate (route II): step 2/2. The protein operates within nucleotide-sugar biosynthesis; UDP-N-acetyl-alpha-D-glucosamine biosynthesis; UDP-N-acetyl-alpha-D-glucosamine from N-acetyl-alpha-D-glucosamine 1-phosphate: step 1/1. It functions in the pathway bacterial outer membrane biogenesis; LPS lipid A biosynthesis. Its function is as follows. Catalyzes the last two sequential reactions in the de novo biosynthetic pathway for UDP-N-acetylglucosamine (UDP-GlcNAc). The C-terminal domain catalyzes the transfer of acetyl group from acetyl coenzyme A to glucosamine-1-phosphate (GlcN-1-P) to produce N-acetylglucosamine-1-phosphate (GlcNAc-1-P), which is converted into UDP-GlcNAc by the transfer of uridine 5-monophosphate (from uridine 5-triphosphate), a reaction catalyzed by the N-terminal domain. This chain is Bifunctional protein GlmU, found in Listeria monocytogenes serotype 4b (strain F2365).